The primary structure comprises 160 residues: Cytochrome b6-f complex subunit 4 (160 aa).

Over 1–35 the chain is Cytoplasmic; it reads MATLKKPDLSDPKLRAKLAKGMGHNYYGEPAWPND. Residues 36 to 56 traverse the membrane as a helical segment; sequence LLYVFPVVIMGTFACIVALSV. Topologically, residues 57 to 94 are lumenal, thylakoid; sequence LDPAMVGEPADPFATPLEILPEWYLYPVFQILRSVPNK. A helical membrane pass occupies residues 95-115; the sequence is LLGVLLMASVPLGLILVPFIE. Residues 116–130 lie on the Cytoplasmic side of the membrane; it reads NVNKFQNPFRRPVAT. Residues 131–151 form a helical membrane-spanning segment; sequence TIFLFGTLVTIWLGIGATFPL. Residues 152-160 are Lumenal, thylakoid-facing; the sequence is DKTLTLGLF.

It belongs to the cytochrome b family. PetD subfamily. In terms of assembly, the 4 large subunits of the cytochrome b6-f complex are cytochrome b6, subunit IV (17 kDa polypeptide, PetD), cytochrome f and the Rieske protein, while the 4 small subunits are PetG, PetL, PetM and PetN. The complex functions as a dimer.

The protein localises to the cellular thylakoid membrane. Its function is as follows. Component of the cytochrome b6-f complex, which mediates electron transfer between photosystem II (PSII) and photosystem I (PSI), cyclic electron flow around PSI, and state transitions. The chain is Cytochrome b6-f complex subunit 4 from Mastigocladus laminosus (Fischerella sp.).